We begin with the raw amino-acid sequence, 113 residues long: Nucleoid-associated protein Syncc9902_0023 (113 aa).

It belongs to the YbaB/EbfC family. Homodimer.

The protein resides in the cytoplasm. It is found in the nucleoid. Its function is as follows. Binds to DNA and alters its conformation. May be involved in regulation of gene expression, nucleoid organization and DNA protection. The protein is Nucleoid-associated protein Syncc9902_0023 of Synechococcus sp. (strain CC9902).